A 185-amino-acid chain; its full sequence is Ribosome-recycling factor (185 aa).

Belongs to the RRF family.

The protein localises to the cytoplasm. Functionally, responsible for the release of ribosomes from messenger RNA at the termination of protein biosynthesis. May increase the efficiency of translation by recycling ribosomes from one round of translation to another. This Myxococcus xanthus (strain DK1622) protein is Ribosome-recycling factor.